A 144-amino-acid polypeptide reads, in one-letter code: Universal stress protein A (144 aa).

The protein belongs to the universal stress protein A family. In terms of assembly, homodimer.

Its subcellular location is the cytoplasm. Required for resistance to DNA-damaging agents. This is Universal stress protein A (uspA) from Salmonella typhimurium (strain LT2 / SGSC1412 / ATCC 700720).